Here is a 168-residue protein sequence, read N- to C-terminus: uncharacterized protein (168 aa).

Residues 1-10 (MSPTTGPQPN) are compositionally biased toward pro residues. 2 disordered regions span residues 1-23 (MSPT…TGPQ) and 117-143 (EPGN…RGPQ).

This is an uncharacterized protein from Homo sapiens (Human).